The sequence spans 107 residues: UPF0145 protein ETA_21660 (107 aa).

This sequence belongs to the UPF0145 family.

The protein is UPF0145 protein ETA_21660 of Erwinia tasmaniensis (strain DSM 17950 / CFBP 7177 / CIP 109463 / NCPPB 4357 / Et1/99).